The following is a 380-amino-acid chain: Oocyte-specific homeobox protein 4 (380 aa).

Disordered regions lie at residues 1–25, 43–95, 152–182, 234–303, and 339–380; these read MSKDSSLHPKYQMASNIPRETSFLV, VTPT…RKCR, KSSQLPRRIGSGPHYRPTSSSGGEVPDFAAS, PRQK…CQTP, and TRSK…SSAY. Residues 43–53 are compositionally biased toward polar residues; it reads VTPTRPLQSSH. Over residues 54–67 the composition is skewed to basic and acidic residues; that stretch reads SVHERDLHQKDSQE. The segment at residues 94-153 is a DNA-binding region (homeobox); sequence CRKERTVYSKEQKCLLQEHFHQCQNPDLEQRKALALLIGVTEYKIQTWFKNRRAKECRKS. Basic and acidic residues predominate over residues 234–250; the sequence is PRQKCRELSREPGHLSS. Positions 260 to 271 are enriched in low complexity; sequence SSPSPAAGAESS. 2 stretches are compositionally biased toward polar residues: residues 278-302 and 351-380; these read LSLSPQLGPPSMTQNSESTFSMCQT and NTVQNLMHGQDSCEITESPKGTVSLPSSAY.

Belongs to the paired homeobox family. Obox subfamily. As to expression, specifically expressed in early embryos.

The protein resides in the nucleus. Transcription factor required for zygotic genome activation (ZGA), a critical event in early embryonic development during which the developmental control passes from maternally provided mRNAs to the expression of the zygotic genome after fertilization. Cannot compensate for loss of other members of the Obox family, suggesting that its function differs from other Obox family members. May regulate expression of histone genes in embryonic stem cells. Also involved in completion of meiosis of oocytes during the meiosis-I/meiosis-II transition. Required to maintain the nuclear membrane of the germinal vesicle in oocytes. The chain is Oocyte-specific homeobox protein 4 from Mus musculus (Mouse).